The chain runs to 272 residues: Acetylglutamate kinase (272 aa).

Residues 41-42, Arg63, and Asn166 contribute to the substrate site; that span reads GG.

The protein belongs to the acetylglutamate kinase family. ArgB subfamily.

It is found in the cytoplasm. The catalysed reaction is N-acetyl-L-glutamate + ATP = N-acetyl-L-glutamyl 5-phosphate + ADP. The protein operates within amino-acid biosynthesis; L-arginine biosynthesis; N(2)-acetyl-L-ornithine from L-glutamate: step 2/4. Its function is as follows. Catalyzes the ATP-dependent phosphorylation of N-acetyl-L-glutamate. The polypeptide is Acetylglutamate kinase (Anaeromyxobacter sp. (strain K)).